The following is a 319-amino-acid chain: G-protein coupled receptor 171 (319 aa).

The Extracellular portion of the chain corresponds to 1 to 21; sequence MTNSSTFCPVYRDLEPFTYFF. Asparagine 3 carries an N-linked (GlcNAc...) asparagine glycan. The chain crosses the membrane as a helical span at residues 22 to 42; that stretch reads YLVFLIGIIGSCFATWAFIQK. The Cytoplasmic portion of the chain corresponds to 43–48; that stretch reads TTNHRC. A helical transmembrane segment spans residues 49-69; the sequence is VSIYLINLLTADFLLTLALPV. The Extracellular portion of the chain corresponds to 70–89; sequence KIIVDLGVAPWKLRIFHCQV. Residues 90 to 110 traverse the membrane as a helical segment; sequence TACLIYINMYLSIIFLAFVSI. Residues 111–132 lie on the Cytoplasmic side of the membrane; sequence DRCLQLIHSCKIYRIQEPGFAK. Residues 133–153 traverse the membrane as a helical segment; it reads MISAVVWLMVLLIMVPNMVIP. Topologically, residues 154–181 are extracellular; that stretch reads IKDIKEKSNVGCMEFKKEFGRNWHLLTN. A helical transmembrane segment spans residues 182–202; it reads FICVAIFLNFSVIILISNFLA. At 203–224 the chain is on the cytoplasmic side; it reads IRQLYRNRDNTNYPSVKSALLH. A helical transmembrane segment spans residues 225-245; that stretch reads ILLVTASYIICFVPYHAVRIP. Residues 246–268 lie on the Extracellular side of the membrane; sequence YTLSQTEVISDCSTRIALFKAKE. The helical transmembrane segment at 269–289 threads the bilayer; sequence ATLLLAVSNLCFDPILYYHLS. The Cytoplasmic portion of the chain corresponds to 290 to 319; it reads KAFRLKVTETFASPKKSKPLEERLRSENDV.

This sequence belongs to the G-protein coupled receptor 1 family. Highly expressed in hypothalamus, including the arcuate nucleus, paraventricular nucleus and dorsomedial hypothalamus. Expressed in periaqueductal gray (at protein level), found primarily in GABAergic neurons and to a lesser extent in glutamatergic neurons. Expressed in T cells and natural killer cells.

Its subcellular location is the cell membrane. G-protein coupled receptor for Big LEN, a 16-amino acid neuropeptide produced from the precursor protein, proSAAS (encoded by PCSK1N). Acts through a G(i)-alpha-mediated pathway in response to Big LEN. Big LEN-GPR171 system plays an important role in regulating feeding and metabolism. Also plays a role in modulating fear and anxiety-like behaviors in the basolateral amygdala. Big LEN-GPR171 modulates the mu-type opioid receptor signaling and antinociception. Acts as a negative regulator T cell function. This is G-protein coupled receptor 171 (Gpr171) from Mus musculus (Mouse).